Here is a 68-residue protein sequence, read N- to C-terminus: Guanine nucleotide-binding protein G(I)/G(S)/G(O) subunit gamma-5B (68 aa).

A G protein gamma domain is found at 3–68; the sequence is GFSSVAATKK…FRPQKVCSFL (66 aa). Position 65 is a cysteine methyl ester (cysteine 65). A lipid anchor (S-geranylgeranyl cysteine) is attached at cysteine 65. Residues 66-68 constitute a propeptide, removed in mature form; sequence SFL.

It belongs to the G protein gamma family. As to quaternary structure, g proteins are composed of 3 units; alpha, beta and gamma.

The protein resides in the cell membrane. Guanine nucleotide-binding proteins (G proteins) are involved as a modulator or transducer in various transmembrane signaling systems. The beta and gamma chains are required for the GTPase activity, for replacement of GDP by GTP, and for G protein-effector interaction. This Homo sapiens (Human) protein is Guanine nucleotide-binding protein G(I)/G(S)/G(O) subunit gamma-5B.